The following is a 215-amino-acid chain: Adenylate kinase (215 aa).

14–19 (GVGKGT) lines the ATP pocket. Residues 34 to 63 (STGDIFRSVMQEQGALSQTLAHYMNQGLYV) form an NMP region. AMP-binding positions include Thr-35, Arg-40, 61–63 (LYV), 91–94 (GYPR), and Gln-98. Positions 128–165 (NRLVCPSCGSVYNKQSKPPLKANQCDRCHATLQARNDD) are LID. Arg-129 serves as a coordination point for ATP. Positions 132 and 135 each coordinate Zn(2+). 138–139 (VY) contributes to the ATP binding site. Residues Cys-152 and Cys-155 each coordinate Zn(2+). AMP contacts are provided by Arg-162 and Arg-173. Position 211 (Gln-211) interacts with ATP.

This sequence belongs to the adenylate kinase family. Monomer.

It is found in the cytoplasm. It carries out the reaction AMP + ATP = 2 ADP. It participates in purine metabolism; AMP biosynthesis via salvage pathway; AMP from ADP: step 1/1. Functionally, catalyzes the reversible transfer of the terminal phosphate group between ATP and AMP. Plays an important role in cellular energy homeostasis and in adenine nucleotide metabolism. The sequence is that of Adenylate kinase from Mycoplasma pneumoniae (strain ATCC 29342 / M129 / Subtype 1) (Mycoplasmoides pneumoniae).